A 434-amino-acid polypeptide reads, in one-letter code: Methylenetetrahydrofolate--tRNA-(uracil-5-)-methyltransferase TrmFO (434 aa).

9-14 (GAGLAG) contacts FAD.

It belongs to the MnmG family. TrmFO subfamily. It depends on FAD as a cofactor.

The protein localises to the cytoplasm. It catalyses the reaction uridine(54) in tRNA + (6R)-5,10-methylene-5,6,7,8-tetrahydrofolate + NADH + H(+) = 5-methyluridine(54) in tRNA + (6S)-5,6,7,8-tetrahydrofolate + NAD(+). It carries out the reaction uridine(54) in tRNA + (6R)-5,10-methylene-5,6,7,8-tetrahydrofolate + NADPH + H(+) = 5-methyluridine(54) in tRNA + (6S)-5,6,7,8-tetrahydrofolate + NADP(+). Its function is as follows. Catalyzes the folate-dependent formation of 5-methyl-uridine at position 54 (M-5-U54) in all tRNAs. The chain is Methylenetetrahydrofolate--tRNA-(uracil-5-)-methyltransferase TrmFO from Listeria welshimeri serovar 6b (strain ATCC 35897 / DSM 20650 / CCUG 15529 / CIP 8149 / NCTC 11857 / SLCC 5334 / V8).